Reading from the N-terminus, the 200-residue chain is UDP-N-acetylglucosamine transferase subunit ALG13 (200 aa).

Belongs to the glycosyltransferase 28 family. Heterodimer with ALG14 to form a functional enzyme.

It is found in the endoplasmic reticulum. It catalyses the reaction an N-acetyl-alpha-D-glucosaminyl-diphospho-di-trans,poly-cis-dolichol + UDP-N-acetyl-alpha-D-glucosamine = an N,N'-diacetylchitobiosyl-diphospho-di-trans,poly-cis-dolichol + UDP + H(+). Its function is as follows. Involved in protein N-glycosylation. Essential for the second step of the dolichol-linked oligosaccharide pathway. The sequence is that of UDP-N-acetylglucosamine transferase subunit ALG13 (ALG13) from Cryptococcus neoformans var. neoformans serotype D (strain B-3501A) (Filobasidiella neoformans).